The sequence spans 313 residues: HPr kinase/phosphorylase (313 aa).

Active-site residues include H140 and K161. Residue 155–162 participates in ATP binding; sequence GDSGVGKS. S162 serves as a coordination point for Mg(2+). D179 serves as the catalytic Proton acceptor; for phosphorylation activity. Proton donor; for dephosphorylation activity. Residues 203-212 form an important for the catalytic mechanism of both phosphorylation and dephosphorylation region; the sequence is LEIRGIGIID. E204 contributes to the Mg(2+) binding site. R245 is an active-site residue. Residues 266 to 271 form an important for the catalytic mechanism of dephosphorylation region; it reads PVKVGR.

Belongs to the HPrK/P family. As to quaternary structure, homohexamer. The cofactor is Mg(2+).

It catalyses the reaction [HPr protein]-L-serine + ATP = [HPr protein]-O-phospho-L-serine + ADP + H(+). The catalysed reaction is [HPr protein]-O-phospho-L-serine + phosphate + H(+) = [HPr protein]-L-serine + diphosphate. Functionally, catalyzes the ATP- as well as the pyrophosphate-dependent phosphorylation of a specific serine residue in HPr, a phosphocarrier protein of the phosphoenolpyruvate-dependent sugar phosphotransferase system (PTS). HprK/P also catalyzes the pyrophosphate-producing, inorganic phosphate-dependent dephosphorylation (phosphorolysis) of seryl-phosphorylated HPr (P-Ser-HPr). The two antagonistic activities of HprK/P are regulated by several intracellular metabolites, which change their concentration in response to the absence or presence of rapidly metabolisable carbon sources (glucose, fructose, etc.) in the growth medium. Therefore, by controlling the phosphorylation state of HPr, HPrK/P is a sensor enzyme that plays a major role in the regulation of carbon metabolism and sugar transport: it mediates carbon catabolite repression (CCR), and regulates PTS-catalyzed carbohydrate uptake and inducer exclusion. The chain is HPr kinase/phosphorylase from Latilactobacillus sakei subsp. sakei (strain 23K) (Lactobacillus sakei subsp. sakei).